The chain runs to 100 residues: Protein MEN-8 (100 aa).

The N-terminal stretch at 1–33 (MANNMKSATFCKATWAIFLVALAILVQLKGSEA) is a signal peptide. Intrachain disulfides connect Cys-38–Cys-76, Cys-48–Cys-65, Cys-66–Cys-91, and Cys-78–Cys-98.

Belongs to the A9/FIL1 family.

It is found in the secreted. This is Protein MEN-8 (MEN-8) from Silene latifolia (White campion).